Here is a 195-residue protein sequence, read N- to C-terminus: Interferon omega-2 (195 aa).

A signal peptide spans 1 to 23 (MALLPSLLTALVVYELWPCGALG). 2 disulfide bridges follow: C24–C122 and C52–C162. A glycan (N-linked (GlcNAc...) asparagine) is linked at N101.

Belongs to the alpha/beta interferon family.

The protein resides in the secreted. The polypeptide is Interferon omega-2 (Equus caballus (Horse)).